Here is a 62-residue protein sequence, read N- to C-terminus: Amolopin-p-MT1 (62 aa).

An N-terminal signal peptide occupies residues Met1–Cys22. Residues Glu23–Val42 constitute a propeptide, removed in mature form.

It belongs to the frog skin active peptide (FSAP) family. Brevinin subfamily. As to expression, expressed by the skin glands.

Its subcellular location is the secreted. Its function is as follows. Antimicrobial peptide. Active against a variety of Gram-negative and Gram-positive bacterial strains. Not active against fungi. Shows weak hemolytic activity against human erythrocytes. This is Amolopin-p-MT1 from Amolops mantzorum (Sichuan torrent frog).